We begin with the raw amino-acid sequence, 290 residues long: Probable ATP-dependent kinase TDA10 (290 aa).

38–45 (GPQGSGKS) provides a ligand contact to ATP.

The protein belongs to the GLYK kinase family.

Its subcellular location is the cytoplasm. The protein resides in the nucleus. ATP-dependent kinase whose specificity is not yet known. In Saccharomyces cerevisiae (strain ATCC 204508 / S288c) (Baker's yeast), this protein is Probable ATP-dependent kinase TDA10 (TDA10).